Consider the following 152-residue polypeptide: Lipoprotein signal peptidase (152 aa).

2 helical membrane passes run Asn55 to Met75 and Leu85 to Phe105. Residues Asp111 and Asp129 contribute to the active site. The helical transmembrane segment at Val124–Leu144 threads the bilayer.

Belongs to the peptidase A8 family.

The protein resides in the cell membrane. It catalyses the reaction Release of signal peptides from bacterial membrane prolipoproteins. Hydrolyzes -Xaa-Yaa-Zaa-|-(S,diacylglyceryl)Cys-, in which Xaa is hydrophobic (preferably Leu), and Yaa (Ala or Ser) and Zaa (Gly or Ala) have small, neutral side chains.. It participates in protein modification; lipoprotein biosynthesis (signal peptide cleavage). Functionally, this protein specifically catalyzes the removal of signal peptides from prolipoproteins. The sequence is that of Lipoprotein signal peptidase from Bacillus cereus (strain G9842).